The sequence spans 81 residues: Serine rich endogenous peptide 21 (81 aa).

Positions methionine 1–alanine 40 are cleaved as a signal peptide. The short motif at lysine 65 to glutamine 79 is the SCOOP motif element. The short motif at serine 71–serine 73 is the SxS motif essential for MIK2 binding element.

The protein belongs to the serine rich endogenous peptide (SCOOP) phytocytokine family. Interacts with MIK2 (via extracellular leucine-rich repeat domain); this interaction triggers the formation of complex between MIK2 and the BAK1/SERK3 and SERK4 coreceptors, and subsequent BAK1 activation by phosphorylation.

The protein localises to the cell membrane. The protein resides in the secreted. It localises to the extracellular space. Its subcellular location is the apoplast. Functionally, brassicaceae-specific phytocytokine (plant endogenous peptide released into the apoplast) perceived by MIK2 in a BAK1/SERK3 and SERK4 coreceptors-dependent manner, that modulates various physiological and antimicrobial processes including growth prevention and reactive oxygen species (ROS) response regulation. This is Serine rich endogenous peptide 21 from Arabidopsis thaliana (Mouse-ear cress).